The sequence spans 358 residues: Cytoplasmic tRNA 2-thiolation protein 1 (358 aa).

It belongs to the TtcA family. CTU1/NCS6/ATPBD3 subfamily.

The protein resides in the cytoplasm. The protein operates within tRNA modification; 5-methoxycarbonylmethyl-2-thiouridine-tRNA biosynthesis. Plays a central role in 2-thiolation of mcm(5)S(2)U at tRNA wobble positions of tRNA(Lys), tRNA(Glu) and tRNA(Gln). Directly binds tRNAs and probably acts by catalyzing adenylation of tRNAs, an intermediate required for 2-thiolation. It is unclear whether it acts as a sulfurtransferase that transfers sulfur from thiocarboxylated URM1 onto the uridine of tRNAs at wobble position. Prior mcm(5) tRNA modification by the elongator complex is required for 2-thiolation. May also be involved in protein urmylation. The polypeptide is Cytoplasmic tRNA 2-thiolation protein 1 (Candida glabrata (strain ATCC 2001 / BCRC 20586 / JCM 3761 / NBRC 0622 / NRRL Y-65 / CBS 138) (Yeast)).